A 194-amino-acid chain; its full sequence is Probable RNA polymerase sigma factor HI_1459 (194 aa).

Residues 45-58 carry the Polymerase core binding motif; sequence DLVQEAFLSAFKNL. The H-T-H motif DNA-binding region spans 161-180; it reads SEEICQETHLTSSNLHTTLY.

It belongs to the sigma-70 factor family. ECF subfamily.

This is Probable RNA polymerase sigma factor HI_1459 from Haemophilus influenzae (strain ATCC 51907 / DSM 11121 / KW20 / Rd).